The primary structure comprises 4083 residues: MSDTNCSAQKLDKSDSVHHMSHSQARPELPPLPVSANEEPSELYKTVMSHSFYPPLMQRTSWTLAVPFKEQDHHRGPSDSIGNNYSLTARDMKLKDLLKVYQPVTISIPRDKTSQGLPLGTSSKTSTEPSKKKMKFNLKAKDDVTGMPFVCKFSSSLSIKNTTDSSVTHPESRPMSPEQQMDVMLQQEMEIESKEQKPSELDLERYYYYLTNGIRKDMIAPENEEVMMRIYKLIPKTLLTTPALEPLQVSLRSEKESDYYYSLMKSIVDYILMDPMEKKRLFIKSIPRLFPHRVIRAPVPWHNIYQSTKKWNEEHLHTVNPMMYKLKELWFAEFQNLRFVRTADLLAGKLPLLPHEYKEVVQKHCREARHILLTKWIPTCAQLFVTQKEHWVHFAPKNDYDSSRNIEEYFASVASFMSLQLRDLVIKSLRDLVSFFMIHKDGNDFKEPYQEMDFFIPQLIMIKLEVRDPIIVFNPTFDDCWQLIKNSFLEIIKNSDGIPKVYLCWKPLASYICVSPHLRMTSVLQVESILFPDLKGYNMILGTVNPEESLVSDFLDQTLEVFKKNQVGPYKYLNVYKKYDDLLDNMAEKGISEFLKEKHEIEDFVTSINSIKKRKNEIASMHITVPLAMFCLDAVFLNYDLCERAQNLKDNLILYQVDVNRETNTSICNQYSTIADKVSEIPANTAELVALIEYLKKSSDVTVFKLRRQLRDASERLEFLMDYADLPSESIEDVFESSRNLLMSKRDQAEMDLIKRCSEFESRLEGYSKELEMFRKREVMTTEEMKNNVEKLHDLSKNLDLALTEFELINKEEELLEKEKSSFPLLQTLMINKIPYEQLWVTAYEFSTKSEEWMNGPLYLMNAEQIAEEIGNMWRTTYKLTKTLIDVPAPKRLAENVKLKIEKFKQHIPILNIACNPGMKDRHWQQISDIVGYEIKPTETTCLANMLEYGFGKFVDKLEPIGAAASKEYSLEKNLEKMKADWVNMCFSFVKYRDTDTSILCAVDDIQLILDDHVIKTQTMCGSVFIKPIEAECRKWEEKLVRVQENLDAWLKCQVTWLYLEPIFSSEDIIAQMPEEGKKFTTVDTYWKSLMAQAVNDTRVMVAADQPRMTEKLQEANVLLEDIQRGLNDYLEKKRLFFPRFFFLSNDELLEILSETKDPLRVQPHLKKCFEGIAKLEFTDNLEIKGMISSEKETVPFIQTIYPVKAKGMVEKWLQQVEQVMLASMRQVIENGIEAYVQVPRNAWVLEWPGQVVICVSSIFWTREVSEALVEDTLTDFLKKSNDQIAQIVELVRGKLSSGARLTLGALTVIDVHARDVVAKLRHDHINSLNDFQWISQLRYYWTEKNVHVQMITTEALYGYEYLGNSPRLVITPLTDRCYRTLMGALKLNLGGAPEGPAGTGKTETTKDLAKALAKQCVVFNCSDGLDYKAMGKFFKGLAQAGAWACFDEFNRIEVEVLSVVAQQILSIQQAIIRKLKRFIFEGTELSLNPTCAVFITMNPGYAGRAELPDNLKALFRTVAMMVPDYALIGEISLYSMGFLDSRSLAQKIVATYRLCSEQLSSQHHYDYGMRAVKSVLTAAGNLKLKYPEENESVLLLRALLDVNLAKFLAQDVPLFQGIISDLFPGVVLPKPDYEVFLEALNNNIRKMKLQPVPWFIGKIIQIYEMMLVRHGYMIVGDPMGGKTSAYKVLAAALGDLHAANQMEEFAVEFKIINPKAITMGQLYGCFDAVSHEWTDGVLANAFREQASSITDDRKWIIFDGPVDAVWIENMNTVLDDNKKLCLMSGEIIQMSSKMSLIFEPADLEQASPATVSRCGMIYMEAHQLGWKPLKDSYMDTLPRCLTKEHTELVEDMFTWLVQPCLDFSRLHCKFVVQTSPIHLAFSMMRLYSSLLDEIRDIQEEEMEIYEGLSSQQIFLWLQGLFLFSLVWTLAGTINAESRKKFDVFFRNLIMGMDDRNPRPKSVKLTKNNIFPERGSIYDFYFLKQGGGHWNAWTEYITKEEETIPANAKVSDLIIPTMETARQSFFLKTYLDHEIPILFVGPTGTGKSAITNDFLLHLPKNVYQPNFINFSARTSANQTQDIIMSKLDRRRKGLFGPPIGKKAVVFVDDLNMPAKEVYGAQPPIELLRQWIDHGYWFDKKDTNRLDIVDVLLVTAMGPPGGGRNDITGRFTRHLNIISINAFEDEILTKIFSSIADWHFGKGFDVMFLRYGKMLVQATQTIYRAAVENFLPTPSKSHYVFNLRDFSRVIQGVLLCPHTHLQDLEKFIRLWIHEVYRVFYDRLIDNDDRQTFFNLVKETTSNCFKQTMEKVLIHLSPTGKITDDNIRSLFFGDYLKPESDQKIYDEIIDLRGLTVVMEYYLDEFNSVSKAPMSLVMFKFAIEHISRICRVLKQKKGHLLLVGIGGSGRQSATKLSTFMNSYELYQIEITKNYTNSDWREDLKKIMLQSGVATKSTVFLFSDNQIKHESFVEDINMLLNTGDVPNIFPADEKADLVEKMQTAARTEGEKVEATPLSMYNFFIERGTNRAYFSLAMSPIGDAFRTRLRMFPSLINCCTIDWFQSWPTDALELVANKFLEDVELDDNIRAEVVSMCKYFQESVKKLSVDYYNTLLRHNYVTPTSYLELILTFKTLLNSKRQEVDTIRNRYLAGLQKLEFASSQVAVMQVELTALQPQLIQTSEDTAMMMVKIELETKEADAKKLLVQADEKEANAAAAISQAIKNECEGDLAEAMPALEAALAALDTLNPSDITLVKSMQNPPGPVKLVMESICVMKGLKPERKPDPSGSGKMIEDYWGVSRKILGDLKFLESLKTYDKDNIPSVIMKRIRERFIDHPDFQPAVIKNVSSACEGLCKWVRAMEVYDRVAKVVAPKRERLREAEGKLEIQMQKLNQKRAELKLVEDRLQDLNDEFELMNRKKNSLEKNIEICSQKLVRAEKLISGLGGEKDRWTEAARQLGIRYDNLTGDVLLASGTVAYLGAFTVDYRAQCQNEWLVSCKDKVIPGSVDFSLSNTLGDPIKIRAWQIAGLPVDSFSVDNGIIVSNSRRWPLMIDPQGQANKWVKNMEKTNKLSVIKFSDTNYVRTLENALQFGTPVLLENVGEELDAFIEPILLKATFKQQGVEYMRLGENIIEYSREFKFYITTRLRNPHYLPEVAVKVCLLNFMITPLGLQDQLLGIVAAKEKPELEEKKNKLILESAQNKKQLKEIEDKILEVLSLCEGNILEDETAIKILSSSKVLSEEISEKQEIASVTETQIDETRMGYKPVAVHSAAIFFCISDLAHIEPMYQYSLTWFINLYVQSLANSNKSDELDLRIEYIIEHFTLSIYNNVCRSLFEKDKLLFSLLLTVGLLKERKAIDEEVWYFLLTGGVALDNPFPNPAPEWLSEKSWGEIVRASSLQKLKGLMEDVMQNIKVWKDIYDSAWPHEESLPSPWFFLQTLEKIAILRCLRPDKIVPAIQNFICETMGKIFIEAPTFDLQGSYGDSSCCVPLIFILSPGADPMAGLLKFADDVSMGGTKTQTISLGQGQGPIAANMINKAIHEGTWVVLQNCHLATSWMPALEKICEEVIVPENTNSEFRLWLTSYPSEKFPVSILQNGIKMTNEPPKGLRANLLRSYLNDPISDPLFFQSCTKPVIWQKLLFGLCFFHAIVQERRNYGALGWNIPYEFNESDLRISMRQIQMFLNDYEEVPFEALTYLTGECNYGGRVTDDKDRRLLLSLLSMFYCKEIETDNYHIAPGDAYVIPPYGSYQSYIEYLRTLPITAHPEVFGLHENADITKDNQETNQLFQGVLLTLPRQSGGSGKSPQEVVEELAQDILSKLPNDFNLEEVMKKYPVVYKESMNTVLRQELIRFNRLTKVVRRSLIDLGRAIKGQVLMSSELEEVFNSMLVGKVPAMWAAKSYPSLKPLGGYVADLLARLTFFQEWIDKGPPVVFWISGFYFTQSFLTGVSQNYARKYTIPIDHIGFEFEVTPKETTMENIPEDGAYIKGLFLEGARWDRSTSQIGESLPKILYDPLPIIWLKPGESASFLHQDIYVCPVYKTSARRGILSTTGHSTNYVLSIELPTDMPQKHWINRGVASLCQLDN.

2 disordered regions span residues 1–37 and 111–132; these read MSDTNCSAQKLDKSDSVHHMSHSQARPELPPLPVSAN and DKTSQGLPLGTSSKTSTEPSKK. The tract at residues 1–1357 is stem; that stretch reads MSDTNCSAQK…HVQMITTEAL (1357 aa). 2 coiled-coil regions span residues 1026–1052 and 1108–1133; these read IKPIEAECRKWEEKLVRVQENLDAWLK and RMTEKLQEANVLLEDIQRGLNDYLEK. AAA regions lie at residues 1358 to 1579, 1639 to 1870, 2003 to 2251, and 2362 to 2613; these read YGYE…VLTA, EALN…LHCK, TIPA…VIQG, and EFNS…LLRH. ATP-binding positions include 1396–1403, 1677–1684, 2041–2048, and 2401–2408; these read GPAGTGKT, GDPMGGKT, GPTGTGKS, and GIGGSGRQ. A stalk region spans residues 2628-2927; that stretch reads FKTLLNSKRQ…NSLEKNIEIC (300 aa). The stretch at 2651 to 2714 forms a coiled coil; that stretch reads QKLEFASSQV…DEKEANAAAA (64 aa). AAA stretches follow at residues 3012–3242 and 3455–3679; these read LGDP…EISE and IQNF…QIQM.

The protein belongs to the dynein heavy chain family. In terms of assembly, consists of at least two heavy chains and a number of intermediate and light chains.

The protein localises to the cytoplasm. The protein resides in the cytoskeleton. It localises to the cilium axoneme. Force generating protein of respiratory cilia. Produces force towards the minus ends of microtubules. Dynein has ATPase activity; the force-producing power stroke is thought to occur on release of ADP. Involved in sperm motility; implicated in sperm flagellar assembly. In Mus musculus (Mouse), this protein is Dynein axonemal heavy chain 3 (Dnah3).